The chain runs to 98 residues: Small ribosomal subunit protein uS19 (98 aa).

Disordered stretches follow at residues 1-30 and 78-98; these read MARSIKKGPFADKHLTKKVEDANKGNKKSV and RTFHGHSAEKKAAAAPGPAKK. Residues 9 to 24 show a composition bias toward basic and acidic residues; it reads PFADKHLTKKVEDANK.

This sequence belongs to the universal ribosomal protein uS19 family.

Protein S19 forms a complex with S13 that binds strongly to the 16S ribosomal RNA. The chain is Small ribosomal subunit protein uS19 from Anaeromyxobacter dehalogenans (strain 2CP-C).